A 508-amino-acid polypeptide reads, in one-letter code: Lysine--tRNA ligase (508 aa).

The Mg(2+) site is built by Glu418 and Glu425.

The protein belongs to the class-II aminoacyl-tRNA synthetase family. Homodimer. Mg(2+) serves as cofactor.

The protein localises to the cytoplasm. The enzyme catalyses tRNA(Lys) + L-lysine + ATP = L-lysyl-tRNA(Lys) + AMP + diphosphate. This is Lysine--tRNA ligase from Burkholderia pseudomallei (strain 1710b).